The chain runs to 424 residues: Deoxyguanosinetriphosphate triphosphohydrolase-like protein (424 aa).

The disordered stretch occupies residues 1 to 24 (MYPYSDADAFRRHPERAKSSQLRT). Residues 8-18 (DAFRRHPERAK) are compositionally biased toward basic and acidic residues. Residues 67–217 (RLTHSLEVAQ…MDFSDDIAYS (151 aa)) form the HD domain.

The protein belongs to the dGTPase family. Type 2 subfamily.

The polypeptide is Deoxyguanosinetriphosphate triphosphohydrolase-like protein (Corynebacterium glutamicum (strain R)).